The chain runs to 219 residues: Large ribosomal subunit protein uL1 (219 aa).

The protein belongs to the universal ribosomal protein uL1 family. As to quaternary structure, part of the 50S ribosomal subunit.

Binds directly to 23S rRNA. Probably involved in E site tRNA release. Functionally, protein L1 is also a translational repressor protein, it controls the translation of its operon by binding to its mRNA. This Pyrococcus horikoshii (strain ATCC 700860 / DSM 12428 / JCM 9974 / NBRC 100139 / OT-3) protein is Large ribosomal subunit protein uL1.